An 86-amino-acid polypeptide reads, in one-letter code: Large ribosomal subunit protein bL27 (86 aa).

This sequence belongs to the bacterial ribosomal protein bL27 family.

The polypeptide is Large ribosomal subunit protein bL27 (Cupriavidus metallidurans (strain ATCC 43123 / DSM 2839 / NBRC 102507 / CH34) (Ralstonia metallidurans)).